A 277-amino-acid polypeptide reads, in one-letter code: Large ribosomal subunit protein uL2c (277 aa).

Polar residues predominate over residues 1–11 (MNTRSYSTFTP). Disordered regions lie at residues 1–47 (MNTR…RNNS) and 254–277 (YSAL…RRRK).

The protein belongs to the universal ribosomal protein uL2 family. As to quaternary structure, part of the 50S ribosomal subunit.

Its subcellular location is the plastid. The protein resides in the chloroplast. The polypeptide is Large ribosomal subunit protein uL2c (rpl2) (Cryptomeria japonica (Japanese cedar)).